The primary structure comprises 103 residues: Histone H4.1 (103 aa).

Gly residues predominate over residues 1–14 (MSGRGKGGKGLGKG). The tract at residues 1–20 (MSGRGKGGKGLGKGGAKRHR) is disordered. Residue K6 is modified to N6-acetyl-N6-methyllysine; alternate. N6-methyllysine; alternate is present on residues K6, K9, and K13. K13 is modified (N6-acetyl-N6-methyllysine; alternate). The DNA-binding element occupies 17-21 (KRHRK). Position 92 is an N6-glutaryllysine (K92).

This sequence belongs to the histone H4 family. The nucleosome is a histone octamer containing two molecules each of H2A, H2B, H3 and H4 assembled in one H3-H4 heterotetramer and two H2A-H2B heterodimers. The octamer wraps approximately 147 bp of DNA. Glutarylation at Lys-92 (H4K91glu) destabilizes nucleosomes by promoting dissociation of the H2A-H2B dimers from nucleosomes.

It is found in the nucleus. The protein resides in the chromosome. Its function is as follows. Core component of nucleosome. Nucleosomes wrap and compact DNA into chromatin, limiting DNA accessibility to the cellular machineries which require DNA as a template. Histones thereby play a central role in transcription regulation, DNA repair, DNA replication and chromosomal stability. DNA accessibility is regulated via a complex set of post-translational modifications of histones, also called histone code, and nucleosome remodeling. The chain is Histone H4.1 (hhfA) from Emericella nidulans (strain FGSC A4 / ATCC 38163 / CBS 112.46 / NRRL 194 / M139) (Aspergillus nidulans).